Reading from the N-terminus, the 75-residue chain is Large ribosomal subunit protein bL31c (75 aa).

This sequence belongs to the bacterial ribosomal protein bL31 family. Type A subfamily. Part of the 50S ribosomal subunit.

Its subcellular location is the plastid. It localises to the chloroplast. Binds the 23S rRNA. This Cyanidium caldarium (Red alga) protein is Large ribosomal subunit protein bL31c.